A 199-amino-acid polypeptide reads, in one-letter code: Probable cobalt-precorrin-6B C(15)-methyltransferase (decarboxylating) (199 aa).

S-adenosyl-L-methionine contacts are provided by residues T24, 48 to 52, D72, and A101; that span reads GCGTG.

It belongs to the methyltransferase superfamily. Archaeal-type CbiT family.

The catalysed reaction is Co-precorrin-6B + S-adenosyl-L-methionine = Co-precorrin-7 + S-adenosyl-L-homocysteine + CO2. The protein operates within cofactor biosynthesis; adenosylcobalamin biosynthesis; cob(II)yrinate a,c-diamide from sirohydrochlorin (anaerobic route): step 8/10. Functionally, catalyzes the methylation of C-15 in cobalt-precorrin-6B followed by the decarboxylation of C-12 to form cobalt-precorrin-7. In Saccharolobus solfataricus (strain ATCC 35092 / DSM 1617 / JCM 11322 / P2) (Sulfolobus solfataricus), this protein is Probable cobalt-precorrin-6B C(15)-methyltransferase (decarboxylating).